The following is a 97-amino-acid chain: Aspartyl/glutamyl-tRNA(Asn/Gln) amidotransferase subunit C (97 aa).

It belongs to the GatC family. In terms of assembly, heterotrimer of A, B and C subunits.

The enzyme catalyses L-glutamyl-tRNA(Gln) + L-glutamine + ATP + H2O = L-glutaminyl-tRNA(Gln) + L-glutamate + ADP + phosphate + H(+). The catalysed reaction is L-aspartyl-tRNA(Asn) + L-glutamine + ATP + H2O = L-asparaginyl-tRNA(Asn) + L-glutamate + ADP + phosphate + 2 H(+). Allows the formation of correctly charged Asn-tRNA(Asn) or Gln-tRNA(Gln) through the transamidation of misacylated Asp-tRNA(Asn) or Glu-tRNA(Gln) in organisms which lack either or both of asparaginyl-tRNA or glutaminyl-tRNA synthetases. The reaction takes place in the presence of glutamine and ATP through an activated phospho-Asp-tRNA(Asn) or phospho-Glu-tRNA(Gln). The polypeptide is Aspartyl/glutamyl-tRNA(Asn/Gln) amidotransferase subunit C (Prochlorococcus marinus (strain SARG / CCMP1375 / SS120)).